Consider the following 100-residue polypeptide: Carboxysome shell vertex protein CcmL (100 aa).

The BMV domain occupies 1–83 (MQLAKVLGTV…LDAMVVGIID (83 aa)).

The protein belongs to the CcmL/EutN family. CcmL subfamily. In terms of assembly, homopentamer. Interacts with full-length CcmM.

The protein localises to the carboxysome. Its function is as follows. Probably forms vertices in the carboxysome, a polyhedral inclusion where RuBisCO (ribulose bisphosphate carboxylase, rbcL-rbcS) is sequestered. Has been modeled to induce curvature upon insertion into an otherwise flat hexagonal molecular layer of CcmK subunits. In Synechocystis sp. (strain ATCC 27184 / PCC 6803 / Kazusa), this protein is Carboxysome shell vertex protein CcmL.